The primary structure comprises 187 residues: KS71A fimbrillin (187 aa).

Residues Met-1–Ala-21 form the signal peptide. A disulfide bond links Cys-43 and Cys-82.

This sequence belongs to the fimbrial protein family.

The protein localises to the fimbrium. Functionally, fimbriae (also called pili), polar filaments radiating from the surface of the bacterium to a length of 0.5-1.5 micrometers and numbering 100-300 per cell, enable bacteria to colonize the epithelium of specific host organs. This Escherichia coli protein is KS71A fimbrillin (KS71A).